A 282-amino-acid chain; its full sequence is Globin-related protein glb-13 (282 aa).

A disordered region spans residues 1–46 (MGQENSKCPHQSLAEKRYKVERPKTKKVSSGSATERCLSTQSDEKN). The span at 13–23 (LAEKRYKVERP) shows a compositional bias: basic and acidic residues. Residues 28 to 41 (VSSGSATERCLSTQ) show a composition bias toward polar residues. In terms of domain architecture, Globin spans 100-249 (FLTRRERILL…IISFMRRGFD (150 aa)). Heme b is bound by residues His-162 and His-194.

The protein belongs to the globin family.

Involved in oxidative stress resistance. The protein is Globin-related protein glb-13 of Caenorhabditis elegans.